The primary structure comprises 339 residues: Methionine import ATP-binding protein MetN 2 (339 aa).

In terms of domain architecture, ABC transporter spans 2-241 (ISFNNVSKVY…PKTKTTQNFV (240 aa)). 38-45 (GFSGAGKS) contacts ATP.

It belongs to the ABC transporter superfamily. Methionine importer (TC 3.A.1.24) family. As to quaternary structure, the complex is composed of two ATP-binding proteins (MetN), two transmembrane proteins (MetI) and a solute-binding protein (MetQ).

The protein resides in the cell membrane. It catalyses the reaction L-methionine(out) + ATP + H2O = L-methionine(in) + ADP + phosphate + H(+). The catalysed reaction is D-methionine(out) + ATP + H2O = D-methionine(in) + ADP + phosphate + H(+). Part of the ABC transporter complex MetNIQ involved in methionine import. Responsible for energy coupling to the transport system. The chain is Methionine import ATP-binding protein MetN 2 from Bacillus cereus (strain ATCC 10987 / NRS 248).